The chain runs to 168 residues: Pleiotrophin (168 aa).

The first 32 residues, 1–32 (MQTPQYLQQRRKFAAAFLAFIFILAAVDTAEA), serve as a signal peptide directing secretion. 5 disulfides stabilise this stretch: Cys-47–Cys-76, Cys-55–Cys-85, Cys-62–Cys-89, Cys-99–Cys-131, and Cys-109–Cys-141. Chondroitin sulfate binding regions lie at residues 92–99 (KKQFGAEC) and 123–131 (KRALHNADC). The interval 141-168 (CGKLTKSKPQAESKKKKKEGKKQEKMLD) is disordered. The chondroitin sulfate A binding stretch occupies residues 147 to 168 (SKPQAESKKKKKEGKKQEKMLD).

As to quaternary structure, interacts with ALK and NEK6. Interacts with PTPRZ1 (via chondroitin sulfate groups); promotes formation of homooligomers; oligomerization impairs tyrosine phosphatase activity. Forms a complex with PTPRZ1 and CTNNB1; this complex inactivates PTPRZ1 protein tyrosine phosphatase activity through PTN interaction and stimulates tyrosine phosphorylation of CTNNB1. Interacts with ITGB3 and ITGA5. Forms a complex with PTPRZ1 and integrin alpha-V/beta-3 (ITGAV:ITGB3) that stimulates endothelial cell migration through ITGB3 'Tyr-773' phosphorylation. Interacts with SDC3 (via heparan sulfate chains); this interaction mediates the neurite outgrowth-promoting signal from PTN to the cytoskeleton of growing neurites; this interaction mediates osteoblast recruitment. Interacts with GPC2 (via heparan sulfate); this interaction promotes neurite outgrowth through binding of PTN with chondroitin sulfate of proteoglycans, thereby releasing PTPRS of chondroitin sulfate proteoglycans (CSPGs) and leading to binding with heparan sulfate of GPC2. Phosphorylated by NEK6.

The protein resides in the secreted. Functionally, secreted growth factor that mediates its signal through cell-surface proteoglycan and non-proteoglycan receptors. Binds cell-surface proteoglycan receptor via their chondroitin sulfate (CS) groups. Thereby regulates many processes like cell proliferation, cell survival, cell growth, cell differentiation and cell migration in several tissues namely neuron and bone. Also plays a role in synaptic plasticity and learning-related behavior by inhibiting long-term synaptic potentiation. Binds PTPRZ1, leading to neutralization of the negative charges of the CS chains of PTPRZ1, inducing PTPRZ1 clustering, thereby causing the dimerization and inactivation of its phosphatase activity leading to increased tyrosine phosphorylation of each of the PTPRZ1 substrates like ALK, CTNNB1 or AFAP1L2 in order to activate the PI3K-AKT pathway. Through PTPRZ1 binding controls oligodendrocyte precursor cell differentiation by enhancing the phosphorylation of AFAP1L2 in order to activate the PI3K-AKT pathway. Forms a complex with PTPRZ1 and integrin alpha-V/beta-3 (ITGAV:ITGB3) that stimulates endothelial cell migration through SRC dephosphorylation and activation that consequently leads to ITGB3 'Tyr-773' phosphorylation. In adult hippocampus promotes dendritic arborization, spine development, and functional integration and connectivity of newborn granule neurons through ALK by activating AKT signaling pathway. Binds GPC2 and chondroitin sulfate proteoglycans (CSPGs) at the neuron surface, leading to abrogation of binding between PTPRS and CSPGs and neurite outgrowth promotion. Binds SDC3 and mediates bone formation by recruiting and attaching osteoblasts/osteoblast precursors to the sites for new bone deposition. Binds ALK and promotes cell survival and cell proliferation through MAPK pathway activation. Inhibits proliferation and enhances differentiation of neural stem cells by inhibiting FGF2-induced fibroblast growth factor receptor signaling pathway. Mediates regulatory mechanisms in normal hemostasis and in hematopoietic regeneration and in maintaining the balance of myeloid and lymphoid regeneration. In addition may play a role in the female reproductive system, auditory response and the progesterone-induced decidualization pathway. This chain is Pleiotrophin, found in Bos taurus (Bovine).